The sequence spans 616 residues: Dihydroxy-acid dehydratase (616 aa).

Residue D81 participates in Mg(2+) binding. C122 contacts [2Fe-2S] cluster. 2 residues coordinate Mg(2+): D123 and K124. Residue K124 is modified to N6-carboxylysine. [2Fe-2S] cluster is bound at residue C195. Mg(2+) is bound at residue E491. Residue S517 is the Proton acceptor of the active site.

Belongs to the IlvD/Edd family. Homodimer. It depends on [2Fe-2S] cluster as a cofactor. Mg(2+) is required as a cofactor.

It carries out the reaction (2R)-2,3-dihydroxy-3-methylbutanoate = 3-methyl-2-oxobutanoate + H2O. The enzyme catalyses (2R,3R)-2,3-dihydroxy-3-methylpentanoate = (S)-3-methyl-2-oxopentanoate + H2O. Its pathway is amino-acid biosynthesis; L-isoleucine biosynthesis; L-isoleucine from 2-oxobutanoate: step 3/4. The protein operates within amino-acid biosynthesis; L-valine biosynthesis; L-valine from pyruvate: step 3/4. Its function is as follows. Functions in the biosynthesis of branched-chain amino acids. Catalyzes the dehydration of (2R,3R)-2,3-dihydroxy-3-methylpentanoate (2,3-dihydroxy-3-methylvalerate) into 2-oxo-3-methylpentanoate (2-oxo-3-methylvalerate) and of (2R)-2,3-dihydroxy-3-methylbutanoate (2,3-dihydroxyisovalerate) into 2-oxo-3-methylbutanoate (2-oxoisovalerate), the penultimate precursor to L-isoleucine and L-valine, respectively. This chain is Dihydroxy-acid dehydratase, found in Pectobacterium carotovorum subsp. carotovorum (strain PC1).